A 631-amino-acid polypeptide reads, in one-letter code: Probable ATP-dependent RNA helicase DDX53 (631 aa).

A KH domain is found at 48–109 (EPPLCFKIKN…EMKAKAKAAI (62 aa)). The Q motif motif lies at 222-250 (RFKDAFQQYPDLLKSIIRVGIVKPTPIQS). Residues Lys244, Gln249, 268-273 (TGTGKT), and His311 contribute to the ATP site. One can recognise a Helicase ATP-binding domain in the interval 253–428 (WPIILQGIDL…LSYLKDPMIV (176 aa)). A DEAD box motif is present at residues 376–379 (DEAD). Residues 440 to 601 (TVKQNIIVTT…SVPEDLVVMA (162 aa)) form the Helicase C-terminal domain.

Belongs to the DEAD box helicase family. As to expression, expressed in testis. Wide expression in various cancer tissues and cancer cell lines.

Its subcellular location is the nucleus. The enzyme catalyses ATP + H2O = ADP + phosphate + H(+). This Homo sapiens (Human) protein is Probable ATP-dependent RNA helicase DDX53 (DDX53).